Consider the following 338-residue polypeptide: Fructose-1,6-bisphosphatase 1 (338 aa).

At Thr2 the chain carries N-acetylthreonine. AMP is bound by residues 18–22 (VMEEG) and 28–32 (TGEMT). Residues Asp69 and Glu98 each contribute to the Mg(2+) site. 113-114 (KY) contacts AMP. Mg(2+)-binding residues include Asp119, Leu121, and Asp122. 122 to 125 (DGSS) provides a ligand contact to substrate. Lys141 is an AMP binding site. An N6-succinyllysine modification is found at Lys151. The residue at position 208 (Ser208) is a Phosphoserine. Substrate is bound by residues 213-216 (NEGY), 244-249 (RYVGSM), Tyr265, and 275-277 (KLR). Phosphotyrosine is present on residues Tyr216, Tyr245, and Tyr265. Glu281 lines the Mg(2+) pocket.

This sequence belongs to the FBPase class 1 family. As to quaternary structure, homotetramer. Requires Mg(2+) as cofactor.

It carries out the reaction beta-D-fructose 1,6-bisphosphate + H2O = beta-D-fructose 6-phosphate + phosphate. Its pathway is carbohydrate biosynthesis; gluconeogenesis. Subject to complex allosteric regulation. The enzyme can assume an active R-state, or an inactive T-state. Intermediate conformations may exist. AMP acts as an allosteric inhibitor. AMP binding affects the turnover of bound substrate and not the affinity for substrate. Fructose 2,6-bisphosphate acts as a competitive inhibitor. Fructose 2,6-bisphosphate and AMP have synergistic effects. Catalyzes the hydrolysis of fructose 1,6-bisphosphate to fructose 6-phosphate in the presence of divalent cations, acting as a rate-limiting enzyme in gluconeogenesis. Plays a role in regulating glucose sensing and insulin secretion of pancreatic beta-cells. Appears to modulate glycerol gluconeogenesis in liver. Important regulator of appetite and adiposity; increased expression of the protein in liver after nutrient excess increases circulating satiety hormones and reduces appetite-stimulating neuropeptides and thus seems to provide a feedback mechanism to limit weight gain. The protein is Fructose-1,6-bisphosphatase 1 (FBP1) of Bos taurus (Bovine).